The following is a 303-amino-acid chain: Glycine--tRNA ligase alpha subunit (303 aa).

It belongs to the class-II aminoacyl-tRNA synthetase family. Tetramer of two alpha and two beta subunits.

The protein localises to the cytoplasm. It carries out the reaction tRNA(Gly) + glycine + ATP = glycyl-tRNA(Gly) + AMP + diphosphate. This chain is Glycine--tRNA ligase alpha subunit (glyQ), found in Helicobacter pylori (strain ATCC 700392 / 26695) (Campylobacter pylori).